We begin with the raw amino-acid sequence, 369 residues long: Chorismate synthase (369 aa).

Residues Arg-48 and Arg-54 each contribute to the NADP(+) site. FMN is bound by residues 125 to 127 (RSS), 238 to 239 (NA), Gly-278, 293 to 297 (KPTSS), and Arg-319.

The protein belongs to the chorismate synthase family. Homotetramer. FMNH2 is required as a cofactor.

The catalysed reaction is 5-O-(1-carboxyvinyl)-3-phosphoshikimate = chorismate + phosphate. It functions in the pathway metabolic intermediate biosynthesis; chorismate biosynthesis; chorismate from D-erythrose 4-phosphate and phosphoenolpyruvate: step 7/7. In terms of biological role, catalyzes the anti-1,4-elimination of the C-3 phosphate and the C-6 proR hydrogen from 5-enolpyruvylshikimate-3-phosphate (EPSP) to yield chorismate, which is the branch point compound that serves as the starting substrate for the three terminal pathways of aromatic amino acid biosynthesis. This reaction introduces a second double bond into the aromatic ring system. In Burkholderia mallei (strain ATCC 23344), this protein is Chorismate synthase.